A 506-amino-acid polypeptide reads, in one-letter code: GMP synthase [glutamine-hydrolyzing] (506 aa).

The Glutamine amidotransferase type-1 domain occupies 4–192 (KLIILDFGSQ…FLDICGMKRD (189 aa)). The active-site Nucleophile is the Cys-79. Catalysis depends on residues His-167 and Glu-169. Residues 193 to 381 (WTPASFIEAT…LGMMPHLIHR (189 aa)) form the GMPS ATP-PPase domain. 220-226 (SGGVDSS) lines the ATP pocket.

Homodimer.

The enzyme catalyses XMP + L-glutamine + ATP + H2O = GMP + L-glutamate + AMP + diphosphate + 2 H(+). The protein operates within purine metabolism; GMP biosynthesis; GMP from XMP (L-Gln route): step 1/1. In terms of biological role, catalyzes the synthesis of GMP from XMP. The sequence is that of GMP synthase [glutamine-hydrolyzing] from Porphyromonas gingivalis (strain ATCC 33277 / DSM 20709 / CIP 103683 / JCM 12257 / NCTC 11834 / 2561).